The following is a 523-amino-acid chain: Type 2 DNA topoisomerase 6 subunit B (523 aa).

ATP is bound by residues N48, D80, 101–102 (SK), 110–117 (GQQGLGCS), and K436.

The protein belongs to the TOP6B family. In terms of assembly, homodimer. Heterotetramer of two Top6A and two Top6B chains.

It catalyses the reaction ATP-dependent breakage, passage and rejoining of double-stranded DNA.. In terms of biological role, relaxes both positive and negative superturns and exhibits a strong decatenase activity. In Methanothermobacter thermautotrophicus (strain ATCC 29096 / DSM 1053 / JCM 10044 / NBRC 100330 / Delta H) (Methanobacterium thermoautotrophicum), this protein is Type 2 DNA topoisomerase 6 subunit B.